We begin with the raw amino-acid sequence, 322 residues long: MQWYLVAALLTVLTSSQGILTTLSQSNGKYKYDYATIPFLAELFKLSFSSFFLWKECQSSSPPRMTKEWRSIRLYLVPSVIYLIHNNVQFATLTYVDPSTYQIMGNLKIVTTGILFRLVLKRKLSNLQWMAVVLLAVGTTTSQVKGCGDAPCDSLFSAPFQGYMLGILSACLSALAGVYTEYLMKKNNDSLYWQNVQLYTFGVIFNMGWLIYGDFKAGFERGPWWQRLFNGYSITTWMVVFNLGSTGLLVSWLMKYSDNIVKVYSTSMAMLLTMVLSVYLFNVRATLQLFLGIVICIISLQMYFMPVNMLVELPQALPVTSK.

Residues 1–2 (MQ) are Cytoplasmic-facing. A helical membrane pass occupies residues 3–23 (WYLVAALLTVLTSSQGILTTL). The Lumenal segment spans residues 24 to 33 (SQSNGKYKYD). A helical membrane pass occupies residues 34 to 54 (YATIPFLAELFKLSFSSFFLW). The Cytoplasmic portion of the chain corresponds to 55 to 75 (KECQSSSPPRMTKEWRSIRLY). The helical transmembrane segment at 76 to 96 (LVPSVIYLIHNNVQFATLTYV) threads the bilayer. Residues 97–100 (DPST) lie on the Lumenal side of the membrane. Residues 101-120 (YQIMGNLKIVTTGILFRLVL) traverse the membrane as a helical segment. Residues 121–126 (KRKLSN) lie on the Cytoplasmic side of the membrane. The helical transmembrane segment at 127–144 (LQWMAVVLLAVGTTTSQV) threads the bilayer. Residues 145–157 (KGCGDAPCDSLFS) lie on the Lumenal side of the membrane. Residues 158–178 (APFQGYMLGILSACLSALAGV) form a helical membrane-spanning segment. Residues 179–198 (YTEYLMKKNNDSLYWQNVQL) lie on the Cytoplasmic side of the membrane. Residues 199-219 (YTFGVIFNMGWLIYGDFKAGF) form a helical membrane-spanning segment. At 220–233 (ERGPWWQRLFNGYS) the chain is on the lumenal side. The chain crosses the membrane as a helical span at residues 234–254 (ITTWMVVFNLGSTGLLVSWLM). Residues 255 to 262 (KYSDNIVK) lie on the Cytoplasmic side of the membrane. A helical membrane pass occupies residues 263-283 (VYSTSMAMLLTMVLSVYLFNV). Residues 284 to 286 (RAT) are Lumenal-facing.

It belongs to the nucleotide-sugar transporter family. CMP-Sialate:CMP antiporter (TC 2.A.7.12) subfamily. As to expression, expressed in roots, leaves and stalks.

Its subcellular location is the golgi apparatus membrane. Functionally, sugar transporter involved in the transport of CMP-sialic acid from the cytoplasm into the Golgi. May transport important nucleotide sugars such as CMP-Kdo (2-keto-3-deoxy-D-manno-octulosonic acid) in physiological conditions. The polypeptide is CMP-sialic acid transporter 1 (Oryza sativa subsp. japonica (Rice)).